Consider the following 175-residue polypeptide: Type II restriction enzyme NgoBV (175 aa).

The catalysed reaction is Endonucleolytic cleavage of DNA to give specific double-stranded fragments with terminal 5'-phosphates.. Its function is as follows. A P subtype restriction enzyme that recognizes the double-stranded sequence 5'-GGNNCC-3'; the cleavage site is unknown. The protein is Type II restriction enzyme NgoBV (ngoBVR) of Neisseria gonorrhoeae.